An 86-amino-acid polypeptide reads, in one-letter code: Putative membrane protein insertion efficiency factor (86 aa).

The protein belongs to the UPF0161 family.

It is found in the cell inner membrane. In terms of biological role, could be involved in insertion of integral membrane proteins into the membrane. This Pasteurella multocida (strain Pm70) protein is Putative membrane protein insertion efficiency factor.